Here is an 872-residue protein sequence, read N- to C-terminus: Homeobox-leucine zipper protein ROC6 (872 aa).

Disordered regions lie at residues 28–53 and 67–130; these read VHNS…GLSL and NRSL…HRHT. The segment covering 74–85 has biased composition (gly residues); the sequence is GNGGSGSGGDGD. Over residues 86–99 the composition is skewed to basic and acidic residues; the sequence is SLGRGREEENDSRS. The segment covering 119-130 has biased composition (basic residues); that stretch reads PRKKKKRYHRHT. Positions 122–181 form a DNA-binding region, homeobox; that stretch reads KKKRYHRHTPQQIQELEAVFKECPHPDEKQRMELSRRLNLESRQVKFWFQNRRTQMKQTQ. Positions 176 to 248 form a coiled coil; sequence QMKQTQIERH…LKDELDRVCA (73 aa). The START domain occupies 340-583; the sequence is GAIDRAVLLE…LQRQCQYLAI (244 aa). The disordered stretch occupies residues 792–818; that stretch reads HNNGASPSPAEVGSGASPNSAAGGGGG.

Belongs to the HD-ZIP homeobox family. Class IV subfamily.

The protein localises to the nucleus. In terms of biological role, probable transcription factor. The chain is Homeobox-leucine zipper protein ROC6 (ROC6) from Oryza sativa subsp. japonica (Rice).